We begin with the raw amino-acid sequence, 264 residues long: 3-methyl-2-oxobutanoate hydroxymethyltransferase (264 aa).

Mg(2+)-binding residues include aspartate 45 and aspartate 84. Residues 45–46 (DS), aspartate 84, and lysine 112 contribute to the 3-methyl-2-oxobutanoate site. Glutamate 114 is a binding site for Mg(2+). Glutamate 181 acts as the Proton acceptor in catalysis.

This sequence belongs to the PanB family. In terms of assembly, homodecamer; pentamer of dimers. Requires Mg(2+) as cofactor.

Its subcellular location is the cytoplasm. The catalysed reaction is 3-methyl-2-oxobutanoate + (6R)-5,10-methylene-5,6,7,8-tetrahydrofolate + H2O = 2-dehydropantoate + (6S)-5,6,7,8-tetrahydrofolate. It functions in the pathway cofactor biosynthesis; (R)-pantothenate biosynthesis; (R)-pantoate from 3-methyl-2-oxobutanoate: step 1/2. Catalyzes the reversible reaction in which hydroxymethyl group from 5,10-methylenetetrahydrofolate is transferred onto alpha-ketoisovalerate to form ketopantoate. This is 3-methyl-2-oxobutanoate hydroxymethyltransferase from Vibrio cholerae serotype O1 (strain ATCC 39541 / Classical Ogawa 395 / O395).